Consider the following 536-residue polypeptide: ATP synthase subunit alpha, mitochondrial (536 aa).

A mitochondrion-targeting transit peptide spans 1–24 (MFKNALRRAGVAAPRISRVAQRGY). ATP is bound at residue 195–202 (GDRQTGKT).

In terms of assembly, F-type ATP synthases have 2 components, the catalytic core F(1) and the membrane-embedded component F(0), linked together by a central stalk and a peripheral stalk. The central stalk, also called rotor shaft, is often seen as part of F(1). The peripheral stalk is seen as part of F(0). F(0) contains the membrane channel next to the rotor. F-type ATP synthases form dimers but each monomer functions independently in ATP generation. The dimer consists of 17 different polypeptides: ATP1 (subunit alpha, 3 molecules per monomer, part of F(1)), ATP2 (subunit beta, 3 copies per monomer, part of F(1)), ATP3 (subunit gamma, part of the central stalk), ATP4 (subunit b, part of the peripheral stalk), ATP5/OSCP (subunit 5/OSCP, part of the peripheral stalk), ATP6 (subunit a, part of the peripheral stalk), ATP7 (subunit d, part of the peripheral stalk), ATP8 (subunit 8, part of the peripheral stalk), OLI1 (subunit c, part of the rotor, 10 molecules per monomer), ATP14 (subunit h, part of the peripheral stalk), ATP15 (subunit epsilon, part of the central stalk), ATP16 (subunit delta, part of the central stalk), ATP17 (subunit f, part of the peripheral stalk), ATP18 (subunit i/j, part of the peripheral stalk), ATP19 (subunit k, dimer-specific, at interface between monomers), ATP20 (subunit g, at interface between monomers), TIM11 (subunit e, at interface between monomers).

It is found in the mitochondrion inner membrane. Functionally, mitochondrial membrane ATP synthase (F(1)F(0) ATP synthase or Complex V) produces ATP from ADP in the presence of a proton gradient across the membrane which is generated by electron transport complexes of the respiratory chain. F-type ATP synthases consist of two structural domains, F(1) - containing the extramembraneous catalytic core, and F(0) - containing the membrane proton channel, linked together by a central stalk and a peripheral stalk. During catalysis, ATP synthesis in the catalytic domain of F(1) is coupled via a rotary mechanism of the central stalk subunits to proton translocation. Subunits alpha/ATP1 and beta/ATP2 form the catalytic core in F(1). Rotation of the central stalk against the surrounding alpha/ATP1(3)beta/ATP2(3) subunits leads to hydrolysis of ATP in three separate catalytic sites on the beta/ATP2 subunits. Subunit alpha/ATP1 does not bear the catalytic high-affinity ATP-binding sites. The protein is ATP synthase subunit alpha, mitochondrial of Yarrowia lipolytica (strain CLIB 122 / E 150) (Yeast).